Consider the following 468-residue polypeptide: Na(+)/H(+) antiporter NhaA (468 aa).

Transmembrane regions (helical) follow at residues 28–48 (FLHV…IALV), 79–99 (LHFW…GMEI), 115–135 (ALPL…YLAF), 143–163 (AGWA…LALL), 173–193 (IFLL…IAFF), 196–216 (GGLD…VLGL), 219–239 (IGIG…TGLL), 240–260 (MTGA…PVVP), 317–337 (ALHP…NAGV), 356–376 (VAGA…WLLV), 392–412 (IVLI…IAML), and 426–446 (LGVL…GAIY).

This sequence belongs to the NhaA Na(+)/H(+) (TC 2.A.33) antiporter family.

Its subcellular location is the cell inner membrane. The catalysed reaction is Na(+)(in) + 2 H(+)(out) = Na(+)(out) + 2 H(+)(in). Na(+)/H(+) antiporter that extrudes sodium in exchange for external protons. The sequence is that of Na(+)/H(+) antiporter NhaA from Bordetella petrii (strain ATCC BAA-461 / DSM 12804 / CCUG 43448).